Here is a 30-residue protein sequence, read N- to C-terminus: M-poneritoxin-Nc3a (30 aa).

Belongs to the ponericin-G family. As to expression, expressed by the venom gland.

Its subcellular location is the secreted. It localises to the target cell membrane. Membrane-perturbating peptide with multiple activities. It is insecticidal, since it induces contractile paralysis in insects (L.cuprina) during several hours and death after 24 hours. It shows a relatively strong and broad-spectrum antibacterial activity against both Gram-positive and Gram-negative bacteria (MIC&lt;20 uM). It is also antiparasitic, since it potently inhibits the larval development of the major pathogenic nematode of ruminants (H.contortus, IC(50)=5.6 uM) and reduces the motility of adult males of the other nematode B.malayi. It also shows cytotoxic activity against HEK293 cells (EC(50)=5-7 uM) but does not induce hemolysis in human erythrocytes. In addition, it causes a moderate increase in intracellular calcium concentration on neuronal and epithelial cell lines, which supports a non-specific membrane perturbation mechanism of action. In vivo, it induces pain by intraplantar injection into mice, suggesting a defensive function against vertebrate predators. The polypeptide is M-poneritoxin-Nc3a (Neoponera commutata (Large hunting ant)).